An 88-amino-acid chain; its full sequence is L-amino-acid oxidase (88 aa).

Residues Glu-74 and 81–86 (GWIDST) contribute to the FAD site. 81-82 (GW) provides a ligand contact to substrate.

It belongs to the flavin monoamine oxidase family. FIG1 subfamily. In terms of assembly, homodimer; non-covalently linked. FAD serves as cofactor. N-glycosylated. Expressed by the venom gland.

It is found in the secreted. The catalysed reaction is an L-alpha-amino acid + O2 + H2O = a 2-oxocarboxylate + H2O2 + NH4(+). It carries out the reaction L-leucine + O2 + H2O = 4-methyl-2-oxopentanoate + H2O2 + NH4(+). It catalyses the reaction L-phenylalanine + O2 + H2O = 3-phenylpyruvate + H2O2 + NH4(+). The enzyme catalyses L-tryptophan + O2 + H2O = indole-3-pyruvate + H2O2 + NH4(+). The catalysed reaction is L-methionine + O2 + H2O = 4-methylsulfanyl-2-oxobutanoate + H2O2 + NH4(+). It carries out the reaction L-isoleucine + O2 + H2O = (S)-3-methyl-2-oxopentanoate + H2O2 + NH4(+). It catalyses the reaction L-arginine + O2 + H2O = 5-guanidino-2-oxopentanoate + H2O2 + NH4(+). The enzyme catalyses L-histidine + O2 + H2O = 3-(imidazol-5-yl)pyruvate + H2O2 + NH4(+). The catalysed reaction is L-asparagine + O2 + H2O = 2-oxosuccinamate + H2O2 + NH4(+). It carries out the reaction L-valine + O2 + H2O = 3-methyl-2-oxobutanoate + H2O2 + NH4(+). It catalyses the reaction L-glutamate + O2 + H2O = H2O2 + 2-oxoglutarate + NH4(+). Catalyzes an oxidative deamination of predominantly hydrophobic and aromatic L-amino acids, thus producing hydrogen peroxide that may contribute to the diverse toxic effects of this enzyme. Is highly active on L-Met, L-Leu, L-Phe, L-Ile, and L-Arg, moderately active on L-His, L-Trp, L-Asn, L-Glu, and L-Val, and weakly or not active on L-Gln, L-Lys, L-Asp, L-Ala, L-Tyr, L-Ser, L-Pro, L-Gly, L-Thr, and L-Cys. Exhibits diverse biological activities, such as hemorrhage, hemolysis, edema, apoptosis of vascular endothelial cells or tumor cell lines, antibacterial and antiparasitic activities. In addition, this protein has an ability to induce apoptosis in cultured HeLa and K562 cells, and inhibits ADP-induced platelet aggregation dose-dependently. Effects of snake L-amino oxidases on platelets are controversial, since they either induce aggregation or inhibit agonist-induced aggregation. These different effects are probably due to different experimental conditions. The chain is L-amino-acid oxidase from Vipera berus berus (Common viper).